The following is a 446-amino-acid chain: Eukaryotic translation initiation factor 2 subunit gamma (446 aa).

The region spanning 21–227 (QATINIGTIG…YIVKKIPIPV (207 aa)) is the tr-type G domain. Residues 30 to 37 (GHVAHGKS) are G1. Residue 33–38 (AHGKST) participates in GTP binding. The tract at residues 58–62 (NITIK) is G2. The segment at 114 to 117 (DCPG) is G3. GTP contacts are provided by residues 170–173 (NKVD) and 205–207 (SAQ). Residues 170-173 (NKVD) form a G4 region. A G5 region spans residues 205–207 (SAQ). Residues 436–446 (AKVVEGKTLKV) form an interacts with cdc123 region.

Belongs to the TRAFAC class translation factor GTPase superfamily. Classic translation factor GTPase family. EIF2G subfamily. In terms of assembly, eukaryotic translation initiation factor 2 eIF2 is a heterotrimeric complex composed of an alpha, a beta and a gamma subunit. The factors eIF-1, eIF-2, eIF-3, TIF5/eIF-5 and methionyl-tRNAi form a multifactor complex (MFC) that may bind to the 40S ribosome. Interacts with cdc123; the interaction is direct.

It is found in the cytoplasm. The protein localises to the cytosol. It catalyses the reaction GTP + H2O = GDP + phosphate + H(+). In terms of biological role, as a subunit of eukaryotic initiation factor 2 eIF2, involved in the early steps of protein synthesis. In the presence of GTP, eIF-2 forms a ternary complex with initiator tRNA Met-tRNAi and then recruits the 40S ribosomal complex and initiation factors eIF-1, eIF-1A and eIF-3 to form the 43S pre-initiation complex (43S PIC), a step that determines the rate of protein translation. The 43S PIC binds to mRNA and scans downstream to the initiation codon, where it forms a 48S initiation complex by codon-anticodon base pairing. This leads to the displacement of eIF-1 to allow GTPase-activating protein (GAP) eIF-5-mediated hydrolysis of eIF2-bound GTP. Hydrolysis of GTP and release of Pi, which makes GTP hydrolysis irreversible, causes the release of the eIF-2-GDP binary complex from the 40S subunit, an event that is essential for the subsequent joining of the 60S ribosomal subunit to form an elongation-competent 80S ribosome. In order for eIF-2 to recycle and catalyze another round of initiation, the GDP bound to eIF-2 must be exchanged with GTP by way of a reaction catalyzed by GDP-GTP exchange factor (GEF) eIF-2B. The protein is Eukaryotic translation initiation factor 2 subunit gamma (tif213) of Schizosaccharomyces pombe (strain 972 / ATCC 24843) (Fission yeast).